A 258-amino-acid chain; its full sequence is Probable pectin methylesterase CGR3 (258 aa).

Over 1-29 (MSRRQVRRVGDSGSFPFVGALHSKSRSSP) the chain is Cytoplasmic. Residues 30–50 (LLSVCLVLVGACLLIGYAYSG) traverse the membrane as a helical segment. Over 51-258 (PGMFKSIREV…CQVFHLKPLH (208 aa)) the chain is Lumenal. Asn-171 is a glycosylation site (N-linked (GlcNAc...) asparagine).

Belongs to the class I-like SAM-binding methyltransferase superfamily.

It is found in the golgi apparatus membrane. In terms of biological role, together with CGR2, required for homogalacturonan pectins (HG) methylesterification in the Golgi apparatus prior to integration into cell walls, essential for general growth and development. Promotes petiole elongation. Impacts photosynthesis and respiration efficiency by influencing leaf mesophyll morphology and physiology; pectin methylesterification modulates both expansion and positioning of cells in leaves, probably by changing cell walls plasticity. The chain is Probable pectin methylesterase CGR3 from Arabidopsis thaliana (Mouse-ear cress).